Here is a 271-residue protein sequence, read N- to C-terminus: Bifunctional protein FolD (271 aa).

NADP(+)-binding positions include 154–156, Ser-181, and Ile-222; that span reads GRS.

It belongs to the tetrahydrofolate dehydrogenase/cyclohydrolase family. In terms of assembly, homodimer.

It catalyses the reaction (6R)-5,10-methylene-5,6,7,8-tetrahydrofolate + NADP(+) = (6R)-5,10-methenyltetrahydrofolate + NADPH. It carries out the reaction (6R)-5,10-methenyltetrahydrofolate + H2O = (6R)-10-formyltetrahydrofolate + H(+). The protein operates within one-carbon metabolism; tetrahydrofolate interconversion. Functionally, catalyzes the oxidation of 5,10-methylenetetrahydrofolate to 5,10-methenyltetrahydrofolate and then the hydrolysis of 5,10-methenyltetrahydrofolate to 10-formyltetrahydrofolate. The sequence is that of Bifunctional protein FolD from Thermotoga sp. (strain RQ2).